Consider the following 593-residue polypeptide: NADH-quinone oxidoreductase subunit C/D (593 aa).

The NADH dehydrogenase I subunit C stretch occupies residues M1–Q184. The NADH dehydrogenase I subunit D stretch occupies residues D208–R593.

It in the N-terminal section; belongs to the complex I 30 kDa subunit family. In the C-terminal section; belongs to the complex I 49 kDa subunit family. As to quaternary structure, NDH-1 is composed of 13 different subunits. Subunits NuoB, CD, E, F, and G constitute the peripheral sector of the complex.

It is found in the cell inner membrane. It carries out the reaction a quinone + NADH + 5 H(+)(in) = a quinol + NAD(+) + 4 H(+)(out). Functionally, NDH-1 shuttles electrons from NADH, via FMN and iron-sulfur (Fe-S) centers, to quinones in the respiratory chain. The immediate electron acceptor for the enzyme in this species is believed to be ubiquinone. Couples the redox reaction to proton translocation (for every two electrons transferred, four hydrogen ions are translocated across the cytoplasmic membrane), and thus conserves the redox energy in a proton gradient. The chain is NADH-quinone oxidoreductase subunit C/D from Pseudomonas putida (strain GB-1).